A 253-amino-acid chain; its full sequence is Glucosamine-6-phosphate deaminase (253 aa).

Aspartate 65 (proton acceptor; for enolization step) is an active-site residue. Asparagine 133 functions as the For ring-opening step in the catalytic mechanism. Histidine 135 functions as the Proton acceptor; for ring-opening step in the catalytic mechanism. Catalysis depends on glutamate 140, which acts as the For ring-opening step.

It belongs to the glucosamine/galactosamine-6-phosphate isomerase family. NagB subfamily.

The enzyme catalyses alpha-D-glucosamine 6-phosphate + H2O = beta-D-fructose 6-phosphate + NH4(+). The protein operates within amino-sugar metabolism; N-acetylneuraminate degradation; D-fructose 6-phosphate from N-acetylneuraminate: step 5/5. Functionally, catalyzes the reversible isomerization-deamination of glucosamine 6-phosphate (GlcN6P) to form fructose 6-phosphate (Fru6P) and ammonium ion. The polypeptide is Glucosamine-6-phosphate deaminase (Corynebacterium glutamicum (strain R)).